The primary structure comprises 205 residues: Pyridoxine/pyridoxamine 5'-phosphate oxidase (205 aa).

FMN-binding positions include 53-58 (RMVLLK), 68-69 (YT), K75, and Q97. Substrate is bound at residue K58. Y115, R119, and S123 together coordinate substrate. Residues 132 to 133 (QS) and W177 each bind FMN. Position 183–185 (183–185 (RLH)) interacts with substrate. R187 provides a ligand contact to FMN.

The protein belongs to the pyridoxamine 5'-phosphate oxidase family. In terms of assembly, homodimer. The cofactor is FMN.

The enzyme catalyses pyridoxamine 5'-phosphate + O2 + H2O = pyridoxal 5'-phosphate + H2O2 + NH4(+). It carries out the reaction pyridoxine 5'-phosphate + O2 = pyridoxal 5'-phosphate + H2O2. It participates in cofactor metabolism; pyridoxal 5'-phosphate salvage; pyridoxal 5'-phosphate from pyridoxamine 5'-phosphate: step 1/1. The protein operates within cofactor metabolism; pyridoxal 5'-phosphate salvage; pyridoxal 5'-phosphate from pyridoxine 5'-phosphate: step 1/1. In terms of biological role, catalyzes the oxidation of either pyridoxine 5'-phosphate (PNP) or pyridoxamine 5'-phosphate (PMP) into pyridoxal 5'-phosphate (PLP). This chain is Pyridoxine/pyridoxamine 5'-phosphate oxidase, found in Mesorhizobium japonicum (strain LMG 29417 / CECT 9101 / MAFF 303099) (Mesorhizobium loti (strain MAFF 303099)).